We begin with the raw amino-acid sequence, 307 residues long: Transaldolase (307 aa).

The active-site Schiff-base intermediate with substrate is the lysine 125.

Belongs to the transaldolase family. Type 1 subfamily.

It is found in the cytoplasm. The catalysed reaction is D-sedoheptulose 7-phosphate + D-glyceraldehyde 3-phosphate = D-erythrose 4-phosphate + beta-D-fructose 6-phosphate. It participates in carbohydrate degradation; pentose phosphate pathway; D-glyceraldehyde 3-phosphate and beta-D-fructose 6-phosphate from D-ribose 5-phosphate and D-xylulose 5-phosphate (non-oxidative stage): step 2/3. Its function is as follows. Transaldolase is important for the balance of metabolites in the pentose-phosphate pathway. This is Transaldolase from Pseudomonas aeruginosa (strain ATCC 15692 / DSM 22644 / CIP 104116 / JCM 14847 / LMG 12228 / 1C / PRS 101 / PAO1).